A 380-amino-acid chain; its full sequence is Forkhead box protein F1 (380 aa).

Positions 1 to 19 (MTAEVQQPSVQTPAHSSPM) are enriched in polar residues. The segment at 1–49 (MTAEVQQPSVQTPAHSSPMTEKPVQTPVMETSSSSSSTKAKKTNAGIRR) is disordered. A DNA-binding region (fork-head) is located at residues 52-146 (KPPYSYIALI…EEGSFRRRPR (95 aa)).

The protein resides in the nucleus. In Danio rerio (Zebrafish), this protein is Forkhead box protein F1 (foxf1).